Reading from the N-terminus, the 337-residue chain is Tryptophan--tRNA ligase (337 aa).

ATP contacts are provided by residues 11 to 13 (QPT) and 19 to 20 (GN). Residues 12–20 (PTGALHLGN) carry the 'HIGH' region motif. Residue aspartate 135 coordinates L-tryptophan. Residues 147–149 (GED), valine 191, and 200–204 (KMSKS) contribute to the ATP site. Residues 200-204 (KMSKS) carry the 'KMSKS' region motif.

It belongs to the class-I aminoacyl-tRNA synthetase family. In terms of assembly, homodimer.

Its subcellular location is the cytoplasm. It catalyses the reaction tRNA(Trp) + L-tryptophan + ATP = L-tryptophyl-tRNA(Trp) + AMP + diphosphate + H(+). Catalyzes the attachment of tryptophan to tRNA(Trp). The protein is Tryptophan--tRNA ligase of Parasynechococcus marenigrum (strain WH8102).